A 1384-amino-acid chain; its full sequence is Protein Gawky (1384 aa).

Disordered stretches follow at residues 1–99 (MREA…VWTG), 148–227 (NGSS…DPRG), 263–335 (TAST…DDGT), and 447–501 (VGAP…SGWS). The tract at residues 1–205 (MREALFSQDG…HRGGNGSGAT (205 aa)) is required for interaction with AGO1. Sufficient for miRNA-mediated silencing stretches follow at residues 1–605 (MREA…SLGS) and 605–830 (SYAD…SVHL). Polar residues predominate over residues 15 to 24 (HVNQDTNWEV). Low complexity predominate over residues 150–171 (SSNITGSSGVATGSSGNSSNAG). Positions 205–490 (TSSDPRDIRM…GVSWGNKQSK (286 aa)) are minimal N-terminal region required for miRNA-mediated silencing. Positions 208-225 (DPRDIRMIDPRDPIRGDP) are enriched in basic and acidic residues. Polar residues-rich tracts occupy residues 449–475 (APSS…NSWS) and 485–501 (GNKQ…SGWS). In terms of domain architecture, UBA spans 547 to 588 (IIKQSKQYRILVENGFKKEDVERALVIANMNIEEAADMLRAN). 7 disordered regions span residues 607–626 (ADHN…PVNS), 809–841 (QNMQ…LRGH), 889–942 (TEFS…NKDW), 962–1022 (EPGK…LSSS), 1052–1102 (TSPL…GVQT), 1188–1221 (SENE…GVGT), and 1318–1368 (GTAN…PSGR). The span at 809–826 (QNMQPTSQQQQPQQQQLP) shows a compositional bias: low complexity. A not required for interaction with AGO1 or miRNAs or for localization to P-bodies but necessary for miRNA-mediated silencing and for interaction with pAbp region spans residues 862–1115 (YQGASNQQSR…NWTGGNTTWG (254 aa)). Polar residues predominate over residues 898-924 (TKQNLTANTSNINSLGLQNDSTWSTGR). The interval 940 to 1215 (KDWSVAQPTS…TSSSGTSGGN (276 aa)) is sufficient for miRNA-mediated silencing. The span at 1010–1022 (SPTDLPPLSLSSS) shows a compositional bias: low complexity. Positions 1052-1061 (TSPLNKSSSR) are enriched in polar residues. Residues 1068 to 1084 (TANSNKSANSNASTPTT) show a composition bias toward low complexity. Residues 1117 to 1189 (SWLLLKNLTA…TTIFAESPSE (73 aa)) form the RRM domain. A compositionally biased stretch (polar residues) spans 1188–1203 (SENEVQSIMQHLPQTP). The segment at 1200–1384 (PQTPSSTSSS…ISLVYSIVDD (185 aa)) is not required for interaction with AGO1 or miRNAs or for localization to P-bodies but necessary for miRNA-mediated silencing, dissociation from AGO1 and miRNAs and interaction with pAbp. Residues 1211–1220 (TSGGNVGGVG) are compositionally biased toward gly residues. Over residues 1318–1349 (GTANSSGSKSSANNLASGQSSASNLTNSTNST) the composition is skewed to low complexity. Residues 1350 to 1365 (WRQTSQNQALQSQSRP) are compositionally biased toward polar residues.

Belongs to the GW182 family. Component of the miRNA-directed RNA-induced silencing complex (miRISC), composed of at least AGO1 and gw, which bind mature miRNAs and targets the selective destruction of homologous RNAs. Interacts (via N-terminal region) with AGO1 (via Piwi domain); the interaction is essential for localization of AGO1 in P-bodies and for miRNA-mediated silencing. Interacts with pAbp/PABPC1; this interaction interferes with the binding of pAbp to eIF4G and is required for miRNA-mediated silencing. Interacts with CCR4-NOT complex members Not1, Rga/NOT2, twin/CCR4, Pop2 and NOT3/5 and with PAN complex members CG8232/PAN2 and CG11486/PAN3.

The protein resides in the cytoplasm. The protein localises to the P-body. Functionally, required for gene silencing mediated by micro-RNAs (miRNAs). Silences both polyadenylated and deadenylated mRNAs. Required for miRNA-mediated translational repression and mRNA decay. Not required for miRNA target recognition. Necessary to initiate but not to maintain silencing. Promotes mRNA deadenylation through the recruitment of the CCR4-NOT and PAN complexes and promotes decapping by the DCP1-DCP2 complex. Dissociates from silenced mRNAs after deadenylation. Required for completion of nuclear divisions during early embryonic development. This Drosophila melanogaster (Fruit fly) protein is Protein Gawky.